We begin with the raw amino-acid sequence, 120 residues long: NAD(P)H-quinone oxidoreductase subunit 3, chloroplastic (120 aa).

3 helical membrane-spanning segments follow: residues isoleucine 9–glycine 29, methionine 64–methionine 84, and valine 88–leucine 108.

The protein belongs to the complex I subunit 3 family. NDH is composed of at least 16 different subunits, 5 of which are encoded in the nucleus.

It localises to the plastid. The protein resides in the chloroplast thylakoid membrane. It catalyses the reaction a plastoquinone + NADH + (n+1) H(+)(in) = a plastoquinol + NAD(+) + n H(+)(out). The catalysed reaction is a plastoquinone + NADPH + (n+1) H(+)(in) = a plastoquinol + NADP(+) + n H(+)(out). NDH shuttles electrons from NAD(P)H:plastoquinone, via FMN and iron-sulfur (Fe-S) centers, to quinones in the photosynthetic chain and possibly in a chloroplast respiratory chain. The immediate electron acceptor for the enzyme in this species is believed to be plastoquinone. Couples the redox reaction to proton translocation, and thus conserves the redox energy in a proton gradient. In Zea mays (Maize), this protein is NAD(P)H-quinone oxidoreductase subunit 3, chloroplastic.